The following is a 532-amino-acid chain: MAAKDVLFANDARQKMLKGVNLLADAVKVTLGPKGRNVVLDKSYGAPTITKDGVSVAKEIELKDKFENMGAQMVKQVASKANDEAGDGTTTATVLAQSFINEGLKAVASGMNPMDLKRGIDKATEAAVEKLREMSKPCSDKESITQVGSISANSDRAIGEIIAEAMEKVGRNGVITVEEGQGLDNELSVVEGMQFDRGYLSPYFITNQENGSVELDNPYILLVDKKVSSIRELLPVLEEVAKSSRSLLIIAEDIEGEALATLVVNNMRGIVRATAVKAPGFGDNRKAMMEDIAVLTAGTVISEEIGLELEKATLEQLGSAKKVTITKDTTTIVGGAAEASAIADRVASIEKQIETTTSQYDKDKLQQRVAKLSGGVAVIKIGAATEVEMKEKKDRVDDALHATRAAVEEGIVAGGGVALTKIAKELADLKGDNDDQNVGIRVALRAMEEPLRQIATNAGDEASVVANAVKAGDADYGYNAATGEYGNMIEMGILDPAKVTRSALQFAASVAGLMITTEAMITNHVEDKELDI.

ATP contacts are provided by residues T30 to P33, K51, D87 to T91, G415, N479 to A481, and D495.

Belongs to the chaperonin (HSP60) family. As to quaternary structure, forms a cylinder of 14 subunits composed of two heptameric rings stacked back-to-back. Interacts with the co-chaperonin GroES.

The protein resides in the cytoplasm. The enzyme catalyses ATP + H2O + a folded polypeptide = ADP + phosphate + an unfolded polypeptide.. Its function is as follows. Together with its co-chaperonin GroES, plays an essential role in assisting protein folding. The GroEL-GroES system forms a nano-cage that allows encapsulation of the non-native substrate proteins and provides a physical environment optimized to promote and accelerate protein folding. The sequence is that of Chaperonin GroEL 2 from Vibrio parahaemolyticus serotype O3:K6 (strain RIMD 2210633).